The sequence spans 961 residues: MINDKIKVKDLAIELGVSTKDLLRVLRELEISAKSTISNISIEDLPKIRAQFNTPNTNKEEERRQIQPGVILRRKRQQPSTNQTDIKLNPVDTNVSESTIQTENLILENKNTLSPHIEETTEKIPATTNEILYNSQIAKIVQYPTPSVPNKTLTTTPHQTKKNHSEKDVLESHDSSNKNIKQSSSQNTEKTNRKPAASAIPEGSSAPSLLPPVSEQIRRLHDEETENSSSEEKNVDIQQKEIPSTQVRVISKPNITQSHSWDANNTRSSSGQRTETEKQSNTAPHTDSREHTGHNKRPVSYQGQNRNNFIATPDTIPNVEHDGQNKKKRHTSRRSTEFNHKFQYNNEDDDISRQNRGRKRHKQKTTSQVTTQPIKLTKRKIRVEEAIRVADMAHQMGLKANEIIKVLFNLGVMATINMSLDIDTATLVAAEFGYEVEKIGFTEEDYLVATAPEQSESLKRRPPVVTIMGHVDHGKTSLLDAIRKTNVTGGEAGGITQHIGAYHVTTKSGEIVFLDTPGHEAFTTMRARGAQVTDIVVLVVAADDGVMEQTREAVNHARAANVPIMVAVNKMDKPEANPDRVLRELSDIGLVPEDWGGDTIVTKVSAKSLDGIDELLELLALQTDILELKANPDKPARGHIVEAKLDKGRGPIATVLIQEGTLHQGDTFVCGVFSGRVRAMFNDQGKKVKDAGPSMPIEVQGFEGVPEAGEAFICLPDEKLARRIAESRAIKQREKELAKESRVTLETFLSKTSNEKEAQVLNLVVKSDVQGSLEAILEALRKLSTAKVRINIIHGGSGAITESDILLASASDAIVIGFNVRPTAKVKEVAEQENVDIRFYDIIYKLVEEIKSAMAGLLAPISREVYLGQADVREIFNVPKIGTIAGSHVSDGKVLRNAGVRLLREGVVVYTGGIASLRRFKEDVREVQKGYECGISLENFNDIKLGDVIESFETVEEAASL.

Residues 146–158 (PSVPNKTLTTTPH) show a composition bias toward polar residues. The disordered stretch occupies residues 146 to 373 (PSVPNKTLTT…KTTSQVTTQP (228 aa)). The segment covering 163 to 176 (NHSEKDVLESHDSS) has biased composition (basic and acidic residues). Positions 177–187 (NKNIKQSSSQN) are enriched in low complexity. Residues 230–239 (SEEKNVDIQQ) are compositionally biased toward basic and acidic residues. Composition is skewed to polar residues over residues 241 to 285 (EIPS…TAPH) and 301 to 310 (YQGQNRNNFI). Residues 355–364 (NRGRKRHKQK) are compositionally biased toward basic residues. Residues 460–627 (RRPPVVTIMG…LLALQTDILE (168 aa)) form the tr-type G domain. The segment at 469-476 (GHVDHGKT) is G1. 469–476 (GHVDHGKT) provides a ligand contact to GTP. The tract at residues 494 to 498 (GITQH) is G2. Residues 515–518 (DTPG) form a G3 region. GTP contacts are provided by residues 515-519 (DTPGH) and 569-572 (NKMD). Residues 569–572 (NKMD) form a G4 region. A G5 region spans residues 605 to 607 (SAK).

The protein belongs to the TRAFAC class translation factor GTPase superfamily. Classic translation factor GTPase family. IF-2 subfamily.

The protein resides in the cytoplasm. One of the essential components for the initiation of protein synthesis. Protects formylmethionyl-tRNA from spontaneous hydrolysis and promotes its binding to the 30S ribosomal subunits. Also involved in the hydrolysis of GTP during the formation of the 70S ribosomal complex. The sequence is that of Translation initiation factor IF-2 from Lawsonia intracellularis (strain PHE/MN1-00).